The following is a 445-amino-acid chain: MAALEERELSQEQTEKLLQFQDLTGIESMDQCRQTLQQHNWNIEAAVQDRLNEQEGVPRVFNNPPNRPLQVNTADHRVYSYVVSRPQPRGLLGWGYYLIMLPFRITYYTLLDIFRFTLRFIRPDPRSRVTDPVGDVVSFIHLFEEKYGRIHPVFYQGTYSQALNDAKQELRFLLVYLHGEDHQDSDDFCRNTLCTPEVTHFINSRMLFWACSTNKPEGFRVSQALRENTYPFLGMIMLKDRRMTVVGRLEGLMQPQDLINQLTFIIEANQTYLVSERLEREERNETQVLRQQQDEAYLVSLRADQEKERKKKEKQEQKRREEEEAQRKQMLEERKKRNLEEEKERKSECLPAEPVPDHPDNVKIIFKMPNGTRVERRFLFTQSLSVIHDFLFSLKETPEKFQIVTSFPRRVLPCLPSEEIPVPPTLQEAGLSQSQLLFVQDLTDD.

The region spanning 12–53 (EQTEKLLQFQDLTGIESMDQCRQTLQQHNWNIEAAVQDRLNE) is the UBA domain. A coiled-coil region spans residues 275-353 (SERLEREERN…ERKSECLPAE (79 aa)). A disordered region spans residues 302–354 (RADQEKERKKKEKQEQKRREEEEAQRKQMLEERKKRNLEEEKERKSECLPAEP). The span at 303–348 (ADQEKERKKKEKQEQKRREEEEAQRKQMLEERKKRNLEEEKERKSE) shows a compositional bias: basic and acidic residues. The UBX domain maps to 357–439 (DHPDNVKIIF…GLSQSQLLFV (83 aa)).

It localises to the cytoplasm. The protein localises to the lipid droplet. Its subcellular location is the endoplasmic reticulum. Its function is as follows. Plays an important role in endoplasmic reticulum-associated degradation (ERAD) that mediates ubiquitin-dependent degradation of misfolded endoplasmic reticulum proteins. Involved in inhibition of lipid droplet degradation. Involved in stress granule disassembly. This chain is FAS-associated factor 2-A (faf2-a), found in Xenopus laevis (African clawed frog).